The following is a 664-amino-acid chain: UvrABC system protein B (664 aa).

One can recognise a Helicase ATP-binding domain in the interval 23–180 (EGLNRGMRFQ…ERLARIGYQR (158 aa)). 36–43 (GVTGSGKT) contacts ATP. The Beta-hairpin motif lies at 89 to 112 (YYDYYQPEAYIPTKDLYIEKNADI). Residues 429 to 588 (DLVNEIVKVK…ITPRSVIKPL (160 aa)) enclose the Helicase C-terminal domain. One can recognise a UVR domain in the interval 622 to 657 (EEYMAVLEEEMYRAASELRYEDAAALRDELFRIREE).

It belongs to the UvrB family. In terms of assembly, forms a heterotetramer with UvrA during the search for lesions. Interacts with UvrC in an incision complex.

The protein resides in the cytoplasm. Its function is as follows. The UvrABC repair system catalyzes the recognition and processing of DNA lesions. A damage recognition complex composed of 2 UvrA and 2 UvrB subunits scans DNA for abnormalities. Upon binding of the UvrA(2)B(2) complex to a putative damaged site, the DNA wraps around one UvrB monomer. DNA wrap is dependent on ATP binding by UvrB and probably causes local melting of the DNA helix, facilitating insertion of UvrB beta-hairpin between the DNA strands. Then UvrB probes one DNA strand for the presence of a lesion. If a lesion is found the UvrA subunits dissociate and the UvrB-DNA preincision complex is formed. This complex is subsequently bound by UvrC and the second UvrB is released. If no lesion is found, the DNA wraps around the other UvrB subunit that will check the other stand for damage. This is UvrABC system protein B from Thermotoga petrophila (strain ATCC BAA-488 / DSM 13995 / JCM 10881 / RKU-1).